The primary structure comprises 380 residues: Queuine tRNA-ribosyltransferase (380 aa).

Catalysis depends on Asp96, which acts as the Proton acceptor. Substrate-binding positions include 96-100 (DSGGF), Asp150, Gln193, and Gly220. The segment at 251–257 (GVGAPDS) is RNA binding. Asp270 serves as the catalytic Nucleophile. Positions 275 to 279 (TRIAR) are RNA binding; important for wobble base 34 recognition. Positions 308, 310, 313, and 339 each coordinate Zn(2+).

Belongs to the queuine tRNA-ribosyltransferase family. As to quaternary structure, homodimer. Within each dimer, one monomer is responsible for RNA recognition and catalysis, while the other monomer binds to the replacement base PreQ1. Zn(2+) serves as cofactor.

It catalyses the reaction 7-aminomethyl-7-carbaguanine + guanosine(34) in tRNA = 7-aminomethyl-7-carbaguanosine(34) in tRNA + guanine. It participates in tRNA modification; tRNA-queuosine biosynthesis. Catalyzes the base-exchange of a guanine (G) residue with the queuine precursor 7-aminomethyl-7-deazaguanine (PreQ1) at position 34 (anticodon wobble position) in tRNAs with GU(N) anticodons (tRNA-Asp, -Asn, -His and -Tyr). Catalysis occurs through a double-displacement mechanism. The nucleophile active site attacks the C1' of nucleotide 34 to detach the guanine base from the RNA, forming a covalent enzyme-RNA intermediate. The proton acceptor active site deprotonates the incoming PreQ1, allowing a nucleophilic attack on the C1' of the ribose to form the product. After dissociation, two additional enzymatic reactions on the tRNA convert PreQ1 to queuine (Q), resulting in the hypermodified nucleoside queuosine (7-(((4,5-cis-dihydroxy-2-cyclopenten-1-yl)amino)methyl)-7-deazaguanosine). The sequence is that of Queuine tRNA-ribosyltransferase from Streptococcus pneumoniae (strain ATCC BAA-255 / R6).